Reading from the N-terminus, the 553-residue chain is Chaperonin GroEL 1 (553 aa).

Residues 29 to 32 (TIGP), 86 to 90 (DGTTT), glycine 413, 476 to 478 (NAL), and aspartate 492 contribute to the ATP site. The interval 521–542 (KPEPPAAPAPGGDPMGGMGGMG) is disordered. A compositionally biased stretch (gly residues) spans 533-542 (DPMGGMGGMG).

It belongs to the chaperonin (HSP60) family. Forms a cylinder of 14 subunits composed of two heptameric rings stacked back-to-back. Interacts with the co-chaperonin GroES.

It is found in the cytoplasm. It carries out the reaction ATP + H2O + a folded polypeptide = ADP + phosphate + an unfolded polypeptide.. Functionally, together with its co-chaperonin GroES, plays an essential role in assisting protein folding. The GroEL-GroES system forms a nano-cage that allows encapsulation of the non-native substrate proteins and provides a physical environment optimized to promote and accelerate protein folding. This chain is Chaperonin GroEL 1, found in Synechococcus sp. (strain WH7803).